A 667-amino-acid chain; its full sequence is DNA ligase (667 aa).

Residues 32–36 (DKDYD) and 80–81 (SL) contribute to the NAD(+) site. K121 acts as the N6-AMP-lysine intermediate in catalysis. NAD(+) contacts are provided by R143, E178, and K314. Zn(2+) contacts are provided by C407, C410, C423, and C429. The 81-residue stretch at 587–667 (IVESIFKDKT…EFEKMLGRES (81 aa)) folds into the BRCT domain.

The protein belongs to the NAD-dependent DNA ligase family. LigA subfamily. Requires Mg(2+) as cofactor. Mn(2+) serves as cofactor.

It carries out the reaction NAD(+) + (deoxyribonucleotide)n-3'-hydroxyl + 5'-phospho-(deoxyribonucleotide)m = (deoxyribonucleotide)n+m + AMP + beta-nicotinamide D-nucleotide.. In terms of biological role, DNA ligase that catalyzes the formation of phosphodiester linkages between 5'-phosphoryl and 3'-hydroxyl groups in double-stranded DNA using NAD as a coenzyme and as the energy source for the reaction. It is essential for DNA replication and repair of damaged DNA. The protein is DNA ligase of Clostridium botulinum (strain Eklund 17B / Type B).